The chain runs to 77 residues: Conotoxin ArMKLT2-0122 (77 aa).

The N-terminal stretch at 1-22 (MKLTCVLIVAVLFLTACQLIAA) is a signal peptide. The propeptide occupies 23–44 (DDSRDLKRFSRRKMRDGMLNTK). 3 disulfides stabilise this stretch: Cys50–Cys65, Cys57–Cys68, and Cys64–Cys73.

Belongs to the conotoxin O1 superfamily. Expressed by the venom duct.

The protein resides in the secreted. This Conus arenatus (Sand-dusted cone) protein is Conotoxin ArMKLT2-0122.